Here is a 475-residue protein sequence, read N- to C-terminus: Glycogen synthase (475 aa).

Lys15 serves as a coordination point for ADP-alpha-D-glucose.

The protein belongs to the glycosyltransferase 1 family. Bacterial/plant glycogen synthase subfamily.

It carries out the reaction [(1-&gt;4)-alpha-D-glucosyl](n) + ADP-alpha-D-glucose = [(1-&gt;4)-alpha-D-glucosyl](n+1) + ADP + H(+). Its pathway is glycan biosynthesis; glycogen biosynthesis. In terms of biological role, synthesizes alpha-1,4-glucan chains using ADP-glucose. The chain is Glycogen synthase from Kosmotoga olearia (strain ATCC BAA-1733 / DSM 21960 / TBF 19.5.1).